Here is a 198-residue protein sequence, read N- to C-terminus: Zinc finger protein 41 (198 aa).

Residues 1 to 12 are compositionally biased toward basic residues; sequence MEKPATRKKKSQ. The tract at residues 1-56 is disordered; that stretch reads MEKPATRKKKSQAPKEEAGAQKATVKGEKTSKGKKATKKPRKPRRPRKEPVLSPED. Over residues 13 to 31 the composition is skewed to basic and acidic residues; sequence APKEEAGAQKATVKGEKTS. The span at 32–47 shows a compositional bias: basic residues; the sequence is KGKKATKKPRKPRRPR. C2H2-type zinc fingers lie at residues 87-109, 115-137, 143-165, and 171-193; these read YECG…QRVH, FKCD…QRIH, FKCG…QKTH, and YGCE…RKRH.

Belongs to the krueppel C2H2-type zinc-finger protein family. Predominantly in the spermatocytes and spermatids of testes. It is also expressed in the fetus and embryonic stem cells at lower levels.

The protein resides in the nucleus. A putative DNA-binding regulatory protein associated with meiosis in spermatogenesis. In Mus musculus (Mouse), this protein is Zinc finger protein 41 (Zfp41).